The primary structure comprises 148 residues: UPF0260 protein PM0539 (148 aa).

The protein belongs to the UPF0260 family.

The polypeptide is UPF0260 protein PM0539 (Pasteurella multocida (strain Pm70)).